A 269-amino-acid chain; its full sequence is Tryptophan synthase alpha chain (269 aa).

Residues E49 and D60 each act as proton acceptor in the active site.

It belongs to the TrpA family. As to quaternary structure, tetramer of two alpha and two beta chains.

It carries out the reaction (1S,2R)-1-C-(indol-3-yl)glycerol 3-phosphate + L-serine = D-glyceraldehyde 3-phosphate + L-tryptophan + H2O. It participates in amino-acid biosynthesis; L-tryptophan biosynthesis; L-tryptophan from chorismate: step 5/5. In terms of biological role, the alpha subunit is responsible for the aldol cleavage of indoleglycerol phosphate to indole and glyceraldehyde 3-phosphate. In Actinobacillus pleuropneumoniae serotype 7 (strain AP76), this protein is Tryptophan synthase alpha chain.